A 393-amino-acid chain; its full sequence is Sulfate adenylyltransferase (393 aa).

This sequence belongs to the sulfate adenylyltransferase family.

It carries out the reaction sulfate + ATP + H(+) = adenosine 5'-phosphosulfate + diphosphate. The protein operates within sulfur metabolism; hydrogen sulfide biosynthesis; sulfite from sulfate: step 1/3. The polypeptide is Sulfate adenylyltransferase (Symbiobacterium thermophilum (strain DSM 24528 / JCM 14929 / IAM 14863 / T)).